The primary structure comprises 255 residues: tRNA uridine(34) hydroxylase (255 aa).

The 95-residue stretch at Ala-125–Ser-219 folds into the Rhodanese domain. Cys-179 acts as the Cysteine persulfide intermediate in catalysis.

This sequence belongs to the TrhO family.

The catalysed reaction is uridine(34) in tRNA + AH2 + O2 = 5-hydroxyuridine(34) in tRNA + A + H2O. Functionally, catalyzes oxygen-dependent 5-hydroxyuridine (ho5U) modification at position 34 in tRNAs. This is tRNA uridine(34) hydroxylase from Nitrobacter winogradskyi (strain ATCC 25391 / DSM 10237 / CIP 104748 / NCIMB 11846 / Nb-255).